A 508-amino-acid chain; its full sequence is Ribonuclease Y (508 aa).

Residues 198-264 (TVSVINLPND…RLTIEKLITD (67 aa)) enclose the KH domain. The HD domain occupies 324 to 417 (VLTHSIEVAK…VQAADAVSAS (94 aa)).

It belongs to the RNase Y family.

Endoribonuclease that initiates mRNA decay. This is Ribonuclease Y from Fusobacterium nucleatum subsp. nucleatum (strain ATCC 25586 / DSM 15643 / BCRC 10681 / CIP 101130 / JCM 8532 / KCTC 2640 / LMG 13131 / VPI 4355).